Consider the following 211-residue polypeptide: Regulator of G-protein signaling 2 (211 aa).

The tract at residues 32–66 (KMKRTLLKDWKTRLSYFLQNSSAPGKPKTGKKSKQ) is necessary for membrane association. The tract at residues 79-116 (LWAEAFDELLASKYGLAAFRAFLKSEFCEENIEFWLAC) is necessary to inhibit protein synthesis. An RGS domain is found at 83–199 (AFDELLASKY…LESEFYQDLC (117 aa)).

In terms of assembly, interacts with GNAQ. Does not interact with GNAI1 and GNAI3. Interacts with EIF2B5. Interacts with PRKG1 (isoform alpha). Post-translationally, phosphorylated by protein kinase C. Phosphorylation by PRKG1 leads to activation of RGS2 activity. Expressed in a wide variety of tissues.

The protein localises to the cell membrane. It localises to the cytoplasm. Its subcellular location is the nucleus. The protein resides in the nucleolus. In terms of biological role, regulates G protein-coupled receptor signaling cascades. Inhibits signal transduction by increasing the GTPase activity of G protein alpha subunits, thereby driving them into their inactive GDP-bound form. It is involved in the negative regulation of the angiotensin-activated signaling pathway. Plays a role in the regulation of blood pressure in response to signaling via G protein-coupled receptors and GNAQ. Plays a role in regulating the constriction and relaxation of vascular smooth muscle. Binds EIF2B5 and blocks its activity, thereby inhibiting the translation of mRNA into protein. The protein is Regulator of G-protein signaling 2 (Rgs2) of Mus musculus (Mouse).